The chain runs to 22 residues: Conantokin-Oc (22 aa).

Residues 1-22 (GEEERKAMAELEAKKAQEALKA) form a disordered region. Glutamate 3, glutamate 4, glutamate 10, and glutamate 18 each carry 4-carboxyglutamate.

Expressed by the venom duct.

The protein resides in the secreted. Conantokins inhibit N-methyl-D-aspartate (NMDA) receptors. This Conus ochroleucus (Perfect cone) protein is Conantokin-Oc.